A 763-amino-acid chain; its full sequence is Endoplasmic reticulum membrane sensor NFE2L1 (763 aa).

A helical; Signal-anchor for type II membrane protein transmembrane segment spans residues Tyr7–Val24. Positions Asp108 to Ser150 are disordered. Over residues Ser116–Gln131 the composition is skewed to low complexity. The segment at Ile180 to Lys188 is cholesterol recognition/amino acid consensus (CRAC) region. Asn338 and Asn350 each carry an N-linked (GlcNAc...) asparagine glycan. The segment at Ser369 to Glu373 is CPD. N-linked (GlcNAc...) asparagine glycosylation is present at Asn413. 2 disordered regions span residues Glu460–Thr523 and Thr585–Arg604. Positions Asp466–Ser470 match the Destruction motif motif. Residues Asp466–Ala514 show a composition bias toward low complexity. Phosphoserine; by CK2 is present on Ser519. Residues Gly589–Arg604 show a composition bias toward basic and acidic residues. At Ser590 the chain carries Phosphoserine; by PKA. A bZIP domain is found at Leu645–Leu708. The segment at Arg647–Lys666 is basic motif. The tract at residues Leu673–Leu687 is leucine-zipper. A Nuclear localization signal motif is present at residues Arg752–Lys759.

This sequence belongs to the bZIP family. CNC subfamily. In terms of assembly, interacts with KEAP1. As to quaternary structure, interacts (via CPD region) with FBXW7; leading to its ubiquitination and degradation. Interacts with SYVN1/HRD1; leading to its ubiquitination and degradation. Interacts (when ubiquitinated) with DDI2; leading to its cleavage. Interacts (via the bZIP domain) with small MAF protein (MAFF, MAFG or MAFK); required for binding to antioxidant response elements (AREs) on DNA. Interacts (via Destruction motif) with BTRC; leading to its ubiquitination and degradation. Interacts with CEBPB; the heterodimer represses expression of DSPP during odontoblast differentiation. Interacts with MOTS-c, a peptide produced by the mitochondrially encoded 12S rRNA MT-RNR1. Cleaved at Leu-104 by the aspartyl protease DDI2 following retrotranslocation, releasing the protein from the endoplasmic reticulum membrane and forming the transcription factor NRF1 that translocates into the nucleus. Ubiquitination is prerequisite for cleavage by aspartyl protease DDI2. Post-translationally, N-glycosylated in normal conditions, when it has a single-pass type II membrane protein topology, with the DNA-binding domain facing the endoplasmic reticulum lumen. Deglycosylated during retrotranslocation to the cytosolic side of the membrane, to have a single-pass type III membrane protein topology with the major part of the protein facing the cytosol. In terms of processing, ubiquitinated by the SCF(FBXW7) complex and SYVN1/HRD1, leading to its degradation by the proteasome. Ubiquitinated during retrotranslocation to the cytosolic side of the membrane: ubiquitination does not lead to degradation and is required for processing by the aspartyl protease DDI2 and subsequent release from the endoplasmic reticulum membrane. Phosphorylation by CK2 at Ser-519 inhibits transcription factor activity, possibly by affecting DNA-binding activity. Phosphorylation at Ser-590 is required for interaction with CEBPB. Post-translationally, ubiquitinated by the SCF(BTRC) complex in the nucleus, leading to its degradation by the proteasome.

It is found in the endoplasmic reticulum membrane. The protein localises to the nucleus. Endoplasmic reticulum membrane sensor that translocates into the nucleus in response to various stresses to act as a transcription factor. Constitutes a precursor of the transcription factor NRF1. Able to detect various cellular stresses, such as cholesterol excess, oxidative stress or proteasome inhibition. In response to stress, it is released from the endoplasmic reticulum membrane following cleavage by the protease DDI2 and translocates into the nucleus to form the transcription factor NRF1. Acts as a key sensor of cholesterol excess: in excess cholesterol conditions, the endoplasmic reticulum membrane form of the protein directly binds cholesterol via its CRAC motif, preventing cleavage and release of the transcription factor NRF1, thereby allowing expression of genes promoting cholesterol removal, such as CD36. Involved in proteasome homeostasis: in response to proteasome inhibition, it is released from the endoplasmic reticulum membrane, translocates to the nucleus and activates expression of genes encoding proteasome subunits. Its function is as follows. CNC-type bZIP family transcription factor that translocates to the nucleus and regulates expression of target genes in response to various stresses. Heterodimerizes with small-Maf proteins (MAFF, MAFG or MAFK) and binds DNA motifs including the antioxidant response elements (AREs), which regulate expression of genes involved in oxidative stress response. Activates or represses expression of target genes, depending on the context. Plays a key role in cholesterol homeostasis by acting as a sensor of cholesterol excess: in low cholesterol conditions, translocates into the nucleus and represses expression of genes involved in defense against cholesterol excess, such as CD36. In excess cholesterol conditions, the endoplasmic reticulum membrane form of the protein directly binds cholesterol via its CRAC motif, preventing cleavage and release of the transcription factor NRF1, thereby allowing expression of genes promoting cholesterol removal. Critical for redox balance in response to oxidative stress: acts by binding the AREs motifs on promoters and mediating activation of oxidative stress response genes, such as GCLC, GCLM, GSS, MT1 and MT2. Plays an essential role during fetal liver hematopoiesis: probably has a protective function against oxidative stress and is involved in lipid homeostasis in the liver. Involved in proteasome homeostasis: in response to proteasome inhibition, mediates the 'bounce-back' of proteasome subunits by translocating into the nucleus and activating expression of genes encoding proteasome subunits. Also involved in regulating glucose flux. Together with CEBPB; represses expression of DSPP during odontoblast differentiation. In response to ascorbic acid induction, activates expression of SP7/Osterix in osteoblasts. The chain is Endoplasmic reticulum membrane sensor NFE2L1 from Bos taurus (Bovine).